Here is a 406-residue protein sequence, read N- to C-terminus: MIPIDPWIILTLILGFGMAWAIGANDAANSMSTAVGAGAITPKQAVLIAGVLEFTGAYFFGKTVTETIRKGIIDPSKISDPNVLIYGSIAALLGATIWLIIATKYGLPVSTTHSIIGGIVGYGIIYGGIGIVNWDKMVRVVLSWVLSPIVGAIFAFLVFRALRRTVLQSEDPVKSAKRWSPFWIGLAFIVIGTMFYIKVLHGSSLYIGILKYGIPTGIIVFIITSMLLRVKFPNVDPYLGAEVIFRKVQVITSGYVALAHGANDVANAIGPVAAVYTIATMGLAGAKVPVPRWILALGGLGIAIGVATYGYRVMETVGKKITELTNTRGFTIDFSAATVVLIASWLGMPISTTHTVVGAVIGVGLARGVKAINKSVVKDIIISWFVTVPVAGIIAGIIFKVLLLIG.

11 helical membrane-spanning segments follow: residues 2–22 (IPID…AWAI), 45–65 (AVLI…KTVT), 83–103 (VLIY…IIAT), 114–134 (SIIG…IVNW), 140–160 (VVLS…LVFR), 182–202 (FWIG…VLHG), 207–227 (IGIL…TSML), 265–285 (VANA…GLAG), 288–308 (VPVP…GVAT), 330–350 (FTID…GMPI), and 385–405 (FVTV…LLLI).

Belongs to the inorganic phosphate transporter (PiT) (TC 2.A.20) family.

It is found in the cell membrane. Its function is as follows. Potential transporter for phosphate. This is Putative phosphate permease PH0640 from Pyrococcus horikoshii (strain ATCC 700860 / DSM 12428 / JCM 9974 / NBRC 100139 / OT-3).